The following is a 353-amino-acid chain: Quinolinate synthase (353 aa).

Residues H47 and S68 each coordinate iminosuccinate. C113 provides a ligand contact to [4Fe-4S] cluster. Iminosuccinate contacts are provided by residues 139–141 (YAN) and S156. Residue C200 coordinates [4Fe-4S] cluster. Iminosuccinate-binding positions include 226 to 228 (HPE) and T243. C297 contacts [4Fe-4S] cluster.

This sequence belongs to the quinolinate synthase family. Type 1 subfamily. [4Fe-4S] cluster is required as a cofactor.

It is found in the cytoplasm. The enzyme catalyses iminosuccinate + dihydroxyacetone phosphate = quinolinate + phosphate + 2 H2O + H(+). Its pathway is cofactor biosynthesis; NAD(+) biosynthesis; quinolinate from iminoaspartate: step 1/1. Functionally, catalyzes the condensation of iminoaspartate with dihydroxyacetone phosphate to form quinolinate. The protein is Quinolinate synthase of Photobacterium profundum (strain SS9).